The following is a 150-amino-acid chain: 3-hydroxyacyl-[acyl-carrier-protein] dehydratase FabZ (150 aa).

Histidine 51 is a catalytic residue.

This sequence belongs to the thioester dehydratase family. FabZ subfamily.

It localises to the cytoplasm. The enzyme catalyses a (3R)-hydroxyacyl-[ACP] = a (2E)-enoyl-[ACP] + H2O. Its function is as follows. Involved in unsaturated fatty acids biosynthesis. Catalyzes the dehydration of short chain beta-hydroxyacyl-ACPs and long chain saturated and unsaturated beta-hydroxyacyl-ACPs. The chain is 3-hydroxyacyl-[acyl-carrier-protein] dehydratase FabZ from Legionella pneumophila (strain Lens).